Consider the following 774-residue polypeptide: Armadillo-like helical domain-containing protein 4 (774 aa).

Residues 1 to 27 (MRGPIVLHICLAFCSLLLFSVATQCLA) form the signal peptide. Topologically, residues 28–714 (FPKIERRREI…KDKAGYMSGM (687 aa)) are extracellular. Basic and acidic residues predominate over residues 41–52 (HAEKGQSDKMNT). Disordered stretches follow at residues 41 to 63 (HAEKGQSDKMNTDDLENSSVTSK) and 97 to 135 (QPGQAGLMQTERPGVSTPTESGVPSAEEVFGSSQPERIS). Asn57 carries N-linked (GlcNAc...) asparagine glycosylation. An N-linked (GlcNAc...) asparagine glycan is attached at Asn189. Basic and acidic residues predominate over residues 221–233 (KTEKFEADTDHRT). Disordered regions lie at residues 221–275 (KTEK…QPLE) and 600–669 (ASYG…PGLE). The segment covering 258–275 (SQMTADNTQAAATKQPLE) has biased composition (polar residues). Positions 607-651 (LESEEGQEDEDEEDEEDEDEEEEDEEEDEEDKDADSLDEGLDGDT) are enriched in acidic residues. The chain crosses the membrane as a helical span at residues 715–735 (LVPVGVGIAGALFILGALYSI). Over 736–774 (KVMNRRRRNGFKRHKRKQREFNSMQDRVMLLADSSEDEF) the chain is Cytoplasmic. 2 positions are modified to phosphoserine: Ser769 and Ser770.

As to quaternary structure, interacts with IL6ST; this interaction prevents IL6ST protein homodimerization and bridges ARMH4 with IL6R and STAT3 and therefore inhibits phosphorylation of STAT3 at 'Tyr-705'. Interacts (via cytoplasmic tail) with RICTOR; this interaction bridges ARMH4 to the mTORC2 complex and inhibits the mTORC2 kinase activity. Expressed in podocytes.

Its subcellular location is the membrane. Functionally, may modulate immune response and may play a role in inflammation. Down-modulates STAT3 signaling throught direct interaction with IL6ST, resulting in the inhibition of phosphorylation of STAT3 at 'Tyr-705'. May negatively regulates AKT signaling by modulating the activity of mTORC2 complex through RICTOR interaction. In Homo sapiens (Human), this protein is Armadillo-like helical domain-containing protein 4.